A 672-amino-acid chain; its full sequence is Penicillin-binding protein activator LpoA (672 aa).

The N-terminal stretch at 1 to 26 (MLPFHLVRTQAGRVIPVLLAALFLAG) is a signal peptide. Cys27 carries N-palmitoyl cysteine lipidation. A lipid anchor (S-diacylglycerol cysteine) is attached at Cys27. Residues 298–336 (APPTDTAQAGQVTPSSDGQNAQSPAPYSDQAVASTTPAP) form a disordered region. The span at 305 to 322 (QAGQVTPSSDGQNAQSPA) shows a compositional bias: polar residues. Positions 327–336 (QAVASTTPAP) are enriched in low complexity.

Belongs to the LpoA family. As to quaternary structure, interacts with PBP1a.

The protein resides in the cell outer membrane. Its function is as follows. Regulator of peptidoglycan synthesis that is essential for the function of penicillin-binding protein 1A (PBP1a). This is Penicillin-binding protein activator LpoA from Pectobacterium parmentieri (strain WPP163) (Pectobacterium wasabiae (strain WPP163)).